The chain runs to 391 residues: Coiled-coil domain-containing protein 85C-A (391 aa).

Coiled-coil stretches lie at residues 23–87 (KCSK…ELCC) and 121–146 (FQQK…KEII). The interval 154–212 (NGAGSRSSIDSQSSLSNLNGGSATVRDVGDGSSTSSTGSAGSPDHHHSHIHKPTEGKIT) is disordered. Composition is skewed to low complexity over residues 158–175 (SRSS…NGGS) and 183–195 (DGSS…SAGS).

This sequence belongs to the CCDC85 family.

It localises to the cell junction. It is found in the tight junction. The protein resides in the adherens junction. Functionally, may play a role in cell-cell adhesion and epithelium development through its interaction with proteins of the beta-catenin family. May play an important role in cortical development, especially in the maintenance of radial glia. This chain is Coiled-coil domain-containing protein 85C-A (ccdc85ca), found in Danio rerio (Zebrafish).